Consider the following 152-residue polypeptide: Ribosome maturation factor RimP (152 aa).

This sequence belongs to the RimP family.

Its subcellular location is the cytoplasm. Required for maturation of 30S ribosomal subunits. The polypeptide is Ribosome maturation factor RimP (Francisella tularensis subsp. tularensis (strain FSC 198)).